A 145-amino-acid chain; its full sequence is 3-hydroxyacyl-[acyl-carrier-protein] dehydratase FabZ (145 aa).

Histidine 48 is a catalytic residue.

The protein belongs to the thioester dehydratase family. FabZ subfamily.

The protein resides in the cytoplasm. The catalysed reaction is a (3R)-hydroxyacyl-[ACP] = a (2E)-enoyl-[ACP] + H2O. Functionally, involved in unsaturated fatty acids biosynthesis. Catalyzes the dehydration of short chain beta-hydroxyacyl-ACPs and long chain saturated and unsaturated beta-hydroxyacyl-ACPs. This Campylobacter hominis (strain ATCC BAA-381 / DSM 21671 / CCUG 45161 / LMG 19568 / NCTC 13146 / CH001A) protein is 3-hydroxyacyl-[acyl-carrier-protein] dehydratase FabZ.